A 152-amino-acid polypeptide reads, in one-letter code: MGSFSITKGFFLFLAFWLPGHIGANPVYSAVSNTDLMDFKNLLDHLEEKMPVEDEVMPPQALSEQTDEAGAALSSLSEVPPWTGEVNPSQRDGGALGRGPWDPSDRSALLKSKLRALLAGPRSLRRSSCFGGRIDRIGAQSGLGCNSFRYRR.

Positions 1-24 (MGSFSITKGFFLFLAFWLPGHIGA) are cleaved as a signal peptide. 2 consecutive propeptides follow at residues 25–122 (NPVY…AGPR) and 92–102 (DGGALGRGPWD). Residues 54–104 (DEVMPPQALSEQTDEAGAALSSLSEVPPWTGEVNPSQRDGGALGRGPWDPS) are disordered. The residue at position 128 (Ser-128) is a Phosphoserine. The cysteines at positions 129 and 145 are disulfide-linked. The important for degradation of atrial natriuretic peptide by IDE stretch occupies residues 146–150 (NSFRY).

This sequence belongs to the natriuretic peptide family. Homodimer; disulfide-linked antiparallel dimer. Post-translationally, the precursor molecule is proteolytically cleaved by CORIN at Arg-122 to produce the atrial natriuretic peptide. Undergoes further proteolytic cleavage by unknown proteases to give rise to long-acting natriuretic peptide, vessel dilator and kaliuretic peptide. Additional processing gives rise to the auriculin and atriopeptin peptides. In the kidneys, alternative processing by an unknown protease results in the peptide urodilatin. In terms of processing, cleavage by MME initiates degradation of the factor and thereby regulates its activity. Degradation by IDE results in reduced activation of NPR1 (in vitro). During IDE degradation, the resulting products can temporarily stimulate NPR2 to produce cGMP, before the fragments are completely degraded and inactivated by IDE (in vitro). Degraded by IDE. Post-translationally, phosphorylation on Ser-128 decreases vasorelaxant activity. As to expression, high levels of expression in the atria compared to the ventricles. Very low levels of expression detected in extracardiac tissues such as the brain, hypothalamus, pituitary, lung and aorta. In terms of tissue distribution, atria (at protein level). High levels of expression in the atria with very low levels of expression in the ventricles (at protein level). Relatively low levels of expression detected in the brain compared to the atria (at protein level).

It localises to the secreted. The protein localises to the perikaryon. The protein resides in the cell projection. Hormone that plays a key role in mediating cardio-renal homeostasis, and is involved in vascular remodeling and regulating energy metabolism. Acts by specifically binding and stimulating NPR1 to produce cGMP, which in turn activates effector proteins, such as PRKG1, that drive various biological responses. Regulates vasodilation, natriuresis, diuresis and aldosterone synthesis and is therefore essential for regulating blood pressure, controlling the extracellular fluid volume and maintaining the fluid-electrolyte balance. Also involved in inhibiting cardiac remodeling and cardiac hypertrophy by inducing cardiomyocyte apoptosis and attenuating the growth of cardiomyocytes and fibroblasts. Plays a role in female pregnancy by promoting trophoblast invasion and spiral artery remodeling in uterus, and thus prevents pregnancy-induced hypertension. In adipose tissue, acts in various cGMP- and PKG-dependent pathways to regulate lipid metabolism and energy homeostasis. This includes up-regulating lipid metabolism and mitochondrial oxygen utilization by activating the AMP-activated protein kinase (AMPK), and increasing energy expenditure by acting via MAPK11 to promote the UCP1-dependent thermogenesis of brown adipose tissue. Binds the clearance receptor NPR3 which removes the hormone from circulation. Its function is as follows. May have a role in cardio-renal homeostasis through regulation of natriuresis, diuresis, vasodilation, and inhibiting aldosterone synthesis. In vitro, promotes the production of cGMP and induces vasodilation. May promote natriuresis, at least in part, by enhancing prostaglandin E2 synthesis resulting in the inhibition of renal Na+-K+-ATPase. However reports on the involvement of this peptide in mammal blood volume and blood pressure homeostasis are conflicting; according to a report, in vivo it is not sufficient to activate cGMP and does not inhibit collecting duct transport nor effect diuresis and natriuresis. Appears to bind to specific receptors that are distinct from the receptors bound by atrial natriuretic peptide and vessel dilator. Possibly enhances protein excretion in urine by decreasing proximal tubular protein reabsorption. Functionally, may have a role in cardio-renal homeostasis through regulation of natriuresis, diuresis, and vasodilation. In vitro, promotes the production of cGMP and induces vasodilation. May promote natriuresis, at least in part, by enhancing prostaglandin E2 synthesis resulting in the inhibition of renal Na+-K+-ATPase. However reports on the involvement of this peptide in mammal blood volume and blood pressure homeostasis are conflicting; according to a report, in vivo it is not sufficient to activate cGMP and does not inhibit collecting duct transport nor effect diuresis and natriuresis. Appears to bind to specific receptors that are distinct from the receptors bound by the atrial natriuretic and long-acting natriuretic peptides. Possibly functions in protein excretion in urine by maintaining the integrity of the proximal tubules and enhancing protein excretion by decreasing proximal tubular protein reabsorption. In terms of biological role, may have a role in cardio-renal homeostasis through regulation of diuresis and inhibiting aldosterone synthesis. In vitro, promotes the production of cGMP and induces vasodilation. May promote natriuresis, at least in part, by enhancing prostaglandin E2 synthesis resulting in the inhibition of renal Na+-K+-ATPase. May have a role in potassium excretion but not sodium excretion (natriuresis). Possibly enhances protein excretion in urine by decreasing proximal tubular protein reabsorption. Hormone produced in the kidneys that appears to be important for maintaining cardio-renal homeostasis. Mediates vasodilation, natriuresis and diuresis primarily in the renal system, in order to maintain the extracellular fluid volume and control the fluid-electrolyte balance. Specifically binds and stimulates cGMP production by renal transmembrane receptors, likely NPR1. Urodilatin not ANP, may be the natriuretic peptide responsible for the regulation of sodium and water homeostasis in the kidney. Its function is as follows. May have a role in cardio-renal homeostasis through regulation of natriuresis and vasodilation. In vivo promotes natriuresis and in vitro, vasodilates renal artery strips. Functionally, may have a role in cardio-renal homeostasis through regulation of regulation of natriuresis and vasodilation. In vivo promotes natriuresis. In vitro, vasodilates intestinal smooth muscle but not smooth muscle strips. In terms of biological role, may have a role in cardio-renal homeostasis through regulation of natriuresis and vasodilation. In vivo promotes natriuresis. In vitro, selectively vasodilates intestinal and vascular smooth muscle strips. May have a role in cardio-renal homeostasis through regulation of natriuresis and vasodilation. In vivo promotes natriuresis. In vitro, selectively vasodilates intestinal smooth muscle but not vascular smooth muscle strips. The chain is Natriuretic peptides A (Nppa) from Rattus norvegicus (Rat).